The chain runs to 101 residues: Apolipoprotein C-II (101 aa).

Positions 1-22 (MGTRFLLALCLVLLVLGFEVQG) are cleaved as a signal peptide. Residues 66–74 (AVDEKLRDL) are lipid binding. Positions 78–101 (STAAMSTYTGIFTDQVLSVLKGEE) are lipoprotein lipase cofactor.

Belongs to the apolipoprotein C2 family. Proapolipoprotein C-II is synthesized as a sialic acid containing glycoprotein which is subsequently desialylated prior to its proteolytic processing. Post-translationally, proapolipoprotein C-II, the major form found in plasma undergoes proteolytic cleavage of its N-terminal hexapeptide to generate apolipoprotein C-II, which occurs as the minor form in plasma.

It is found in the secreted. Functionally, component of chylomicrons, very low-density lipoproteins (VLDL), low-density lipoproteins (LDL), and high-density lipoproteins (HDL) in plasma. Plays an important role in lipoprotein metabolism as an activator of lipoprotein lipase. Both proapolipoprotein C-II and apolipoprotein C-II can activate lipoprotein lipase. In Macaca fascicularis (Crab-eating macaque), this protein is Apolipoprotein C-II (APOC2).